Here is a 338-residue protein sequence, read N- to C-terminus: Glycerol-3-phosphate dehydrogenase [NAD(P)+] (338 aa).

Residues Ser-13, Trp-14, and Lys-108 each coordinate NADPH. Lys-108, Gly-139, and Ser-141 together coordinate sn-glycerol 3-phosphate. An NADPH-binding site is contributed by Ala-143. The sn-glycerol 3-phosphate site is built by Lys-194, Asp-247, Ser-257, Arg-258, and Asn-259. Catalysis depends on Lys-194, which acts as the Proton acceptor. Arg-258 is an NADPH binding site. Residues Val-282 and Glu-284 each contribute to the NADPH site.

It belongs to the NAD-dependent glycerol-3-phosphate dehydrogenase family.

It localises to the cytoplasm. It carries out the reaction sn-glycerol 3-phosphate + NAD(+) = dihydroxyacetone phosphate + NADH + H(+). The catalysed reaction is sn-glycerol 3-phosphate + NADP(+) = dihydroxyacetone phosphate + NADPH + H(+). It participates in membrane lipid metabolism; glycerophospholipid metabolism. Functionally, catalyzes the reduction of the glycolytic intermediate dihydroxyacetone phosphate (DHAP) to sn-glycerol 3-phosphate (G3P), the key precursor for phospholipid synthesis. The polypeptide is Glycerol-3-phosphate dehydrogenase [NAD(P)+] (Streptococcus suis (strain 98HAH33)).